Consider the following 247-residue polypeptide: Neurotrophic factor BDNF precursor form (247 aa).

The signal sequence occupies residues 1 to 18; the sequence is MTILFLTMVISYFGCMKA. Residues 19-128 constitute a propeptide that is removed on maturation; the sequence is APMKEANVRG…AANMSMRVRR (110 aa). The N-linked (GlcNAc...) asparagine glycan is linked to asparagine 121. 3 cysteine pairs are disulfide-bonded: cysteine 141–cysteine 208, cysteine 186–cysteine 237, and cysteine 196–cysteine 239.

It belongs to the NGF-beta family. Monomers and homodimers. Binds to NTRK2/TRKB. Can form heterodimers with other neurotrophin family members, such as NTF3 and NTF4 (in vitro), but the physiological relevance of this is not clear. BDNF precursor form: interacts with the heterodimer formed by NGFR and SORCS2. Mature BDNF has much lower affinity for the heterodimer formed by NGFR and SORCS2. N-glycosylated and glycosulfated, contrary to mature BDNF. In terms of processing, mature BDNF is produced by proteolytic removal of the propeptide, catalyzed by a FURIN family member. In addition, the precursor form is proteolytically cleaved within the propeptide, but this is not an obligatory intermediate for the production of mature BDNF. Can be converted into mature BDNF by plasmin (PLG).

The protein resides in the secreted. Its function is as follows. Important signaling molecule that activates signaling cascades downstream of NTRK2. During development, promotes the survival and differentiation of selected neuronal populations of the peripheral and central nervous systems. Participates in axonal growth, pathfinding and in the modulation of dendritic growth and morphology. Major regulator of synaptic transmission and plasticity at adult synapses in many regions of the CNS. The versatility of BDNF is emphasized by its contribution to a range of adaptive neuronal responses including long-term potentiation (LTP), long-term depression (LTD), certain forms of short-term synaptic plasticity, as well as homeostatic regulation of intrinsic neuronal excitability. In terms of biological role, important signaling molecule that activates signaling cascades downstream of NTRK2. Activates signaling cascades via the heterodimeric receptor formed by NGFR and SORCS2. Signaling via NGFR and SORCS2 plays a role in synaptic plasticity and long-term depression (LTD). Binding to NGFR and SORCS2 promotes neuronal apoptosis. Promotes neuronal growth cone collapse. This chain is Neurotrophic factor BDNF precursor form (BDNF), found in Ailuropoda melanoleuca (Giant panda).